The primary structure comprises 267 residues: Taurine import ATP-binding protein TauB (267 aa).

Residues 6–238 (FNEASLIYPA…DILAGAPASE (233 aa)) enclose the ABC transporter domain. 43 to 50 (GRSGSGKT) lines the ATP pocket.

The protein belongs to the ABC transporter superfamily. Taurine importer (TC 3.A.1.17.1) family. The complex is composed of two ATP-binding proteins (TauB), two transmembrane proteins (TauC) and a solute-binding protein (TauA).

Its subcellular location is the cell inner membrane. The enzyme catalyses taurine(out) + ATP + H2O = taurine(in) + ADP + phosphate + H(+). Its function is as follows. Part of the ABC transporter complex TauABC involved in taurine import. Responsible for energy coupling to the transport system. In Sinorhizobium fredii (strain NBRC 101917 / NGR234), this protein is Taurine import ATP-binding protein TauB.